The following is a 66-amino-acid chain: Large ribosomal subunit protein bL33 (66 aa).

This sequence belongs to the bacterial ribosomal protein bL33 family.

This Wolbachia pipientis subsp. Culex pipiens (strain wPip) protein is Large ribosomal subunit protein bL33.